The chain runs to 2223 residues: Protein CHROMATIN REMODELING 4 (2223 aa).

The interval 39–69 (FDSPEYTSSSKPSKQRLKTDSTPERNSSKRK) is disordered. The span at 55-69 (LKTDSTPERNSSKRK) shows a compositional bias: basic and acidic residues. The PHD-type zinc finger occupies 75–122 (YFECVICDLGGDLLCCDSCPRTYHTACLNPPLKRIPNGKWICPKCSPN). Basic and acidic residues-rich tracts occupy residues 173-187 (EKGKSISAEESKSTG), 207-223 (SADDRPDSSSHGEDDLG), 248-285 (ESKLSDTEKTHEAPVEKLEHASSEIVENKTVAEMETGK), and 294-305 (ELNDGESLERCK). Disordered regions lie at residues 173-235 (EKGK…LPSD), 248-381 (ESKL…CLED), and 441-474 (AEDRIDSSSETGKSSRDSRLRDKDMDDSALGTEG). A compositionally biased stretch (basic residues) spans 306–315 (TDKKRAKKSL). The segment covering 353–368 (ETPEKVKKLPKEERRA) has biased composition (basic and acidic residues). Polar residues predominate over residues 372–381 (TNKSSSCLED). Positions 441–466 (AEDRIDSSSETGKSSRDSRLRDKDMD) are enriched in basic and acidic residues. Chromo domains follow at residues 531–587 (EEIE…YKAK) and 601–663 (KQPQ…ERNS). A Helicase ATP-binding domain is found at 701–878 (RRCWHKSKNV…YNLLNFLQPS (178 aa)). 714–721 (DEMGLGKT) serves as a coordination point for ATP. The DEAH box signature appears at 829–832 (DEGH). A Nuclear localization signal motif is present at residues 902 to 909 (LKKLVAPH). A Helicase C-terminal domain is found at 1008 to 1167 (LLHSMLKVLH…GSQKEFEDIL (160 aa)). Disordered regions lie at residues 1268 to 1300 (EETAEEQVGAESPALVTDDTGEPSSERKDDDVV), 1341 to 1380 (EAYAPHTSGPVNESGGEDEKEPEPELKKEYTPAGRALKEK), 1394 to 1463 (RRNS…ECLP), 1483 to 1511 (SESSRRNYSRPGSRQNRPITGPHFPFNLP), 1760 to 1779 (LSSLPSKSSRTDKSTKSSLF), and 2006 to 2223 (IPPF…LSDD). Basic and acidic residues predominate over residues 1363 to 1380 (EPELKKEYTPAGRALKEK). The stretch at 1375-1402 (RALKEKFTKLRERQKNLIARRNSVEESL) forms a coiled coil. A compositionally biased stretch (polar residues) spans 1403-1414 (PSGNVDQVTEVA). Residues 2009-2019 (FVIPEPPPPAP) are compositionally biased toward pro residues. Residues 2025-2035 (SLRKKRKRKLH) are compositionally biased toward basic residues. 3 stretches are compositionally biased toward polar residues: residues 2039-2061 (QKTTDIGSSSHNAVESSSQGNPQ), 2075-2096 (GETSGSSQPKLPPHNLNSTEPL), and 2128-2148 (TGTTKSISLESQSSEPETINQ). Residues 2157–2171 (DEKVESERTPLHSDE) are compositionally biased toward basic and acidic residues. Positions 2189-2215 (IEAESQNTNAEEEAEAQEEDEESMKMV) form a coiled coil. Over residues 2198-2210 (AEEEAEAQEEDEE) the composition is skewed to acidic residues.

This sequence belongs to the SNF2/RAD54 helicase family.

It localises to the nucleus. Functionally, chromatin-remodeling protein that binds DNA through histones and regulates gene transcription. May specifically recognize and bind trimethylated 'Lys-27' (H3K27me3) and non-methylated 'Lys-4' of histone H3. Probable chromatin remodeling factor. The protein is Protein CHROMATIN REMODELING 4 of Arabidopsis thaliana (Mouse-ear cress).